The sequence spans 154 residues: Insulin-like growth factor 1 (154 aa).

A b region spans residues 50–78; the sequence is GPETLCGAELVDALQFVCGDRGFYFNKPT. Disulfide bonds link cysteine 55-cysteine 97, cysteine 67-cysteine 110, and cysteine 96-cysteine 101. The c stretch occupies residues 79-90; it reads GYGSSSRRAPQT. Residues 91–111 form an a region; sequence GIVDECCFRSCDLRRLEMYCA. Positions 112–119 are d; the sequence is PLKAAKSA. Residues 120 to 154 constitute a propeptide, e peptide; the sequence is RSVRAQRHTDMPKAQKEVHLKNTSRGSAGNKNYRM. A disordered region spans residues 121-154; it reads SVRAQRHTDMPKAQKEVHLKNTSRGSAGNKNYRM. A compositionally biased stretch (basic and acidic residues) spans 126-139; it reads RHTDMPKAQKEVHL. Polar residues predominate over residues 140-154; it reads KNTSRGSAGNKNYRM.

It belongs to the insulin family. In terms of assembly, forms a ternary complex with IGFR1 and ITGAV:ITGB3. Forms a ternary complex with IGFR1 and ITGA6:ITGB4. Forms a ternary complex with IGFBP3 and ALS.

It is found in the secreted. Its function is as follows. The insulin-like growth factors, isolated from plasma, are structurally and functionally related to insulin but have a much higher growth-promoting activity. May be a physiological regulator of [1-14C]-2-deoxy-D-glucose (2DG) transport and glycogen synthesis in osteoblasts. Stimulates glucose transport in bone-derived osteoblastic (PyMS) cells and is effective at much lower concentrations than insulin, not only regarding glycogen and DNA synthesis but also with regard to enhancing glucose uptake. May play a role in synapse maturation. Ca(2+)-dependent exocytosis of IGF1 is required for sensory perception of smell in the olfactory bulb. Acts as a ligand for IGF1R. Binds to the alpha subunit of IGF1R, leading to the activation of the intrinsic tyrosine kinase activity which autophosphorylates tyrosine residues in the beta subunit thus initiating a cascade of down-stream signaling events leading to activation of the PI3K-AKT/PKB and the Ras-MAPK pathways. Binds to integrins ITGAV:ITGB3 and ITGA6:ITGB4. Its binding to integrins and subsequent ternary complex formation with integrins and IGFR1 are essential for IGF1 signaling. Induces the phosphorylation and activation of IGFR1, MAPK3/ERK1, MAPK1/ERK2 and AKT1. As part of the MAPK/ERK signaling pathway, acts as a negative regulator of apoptosis in cardiomyocytes via promotion of STUB1/CHIP-mediated ubiquitination and degradation of ICER-type isoforms of CREM. The sequence is that of Insulin-like growth factor 1 from Ovis aries (Sheep).